Consider the following 149-residue polypeptide: Nucleoside diphosphate kinase (149 aa).

The ATP site is built by Lys-9, Phe-57, Arg-85, Thr-91, Arg-102, and Asn-112. Catalysis depends on His-115, which acts as the Pros-phosphohistidine intermediate.

The protein belongs to the NDK family. In terms of assembly, homotetramer. Mg(2+) is required as a cofactor.

The protein localises to the cytoplasm. It carries out the reaction a 2'-deoxyribonucleoside 5'-diphosphate + ATP = a 2'-deoxyribonucleoside 5'-triphosphate + ADP. The enzyme catalyses a ribonucleoside 5'-diphosphate + ATP = a ribonucleoside 5'-triphosphate + ADP. Major role in the synthesis of nucleoside triphosphates other than ATP. The ATP gamma phosphate is transferred to the NDP beta phosphate via a ping-pong mechanism, using a phosphorylated active-site intermediate. The sequence is that of Nucleoside diphosphate kinase from Herpetosiphon aurantiacus (strain ATCC 23779 / DSM 785 / 114-95).